Reading from the N-terminus, the 298-residue chain is Elongation factor Ts (298 aa).

The tract at residues Thr-79–Val-82 is involved in Mg(2+) ion dislocation from EF-Tu.

This sequence belongs to the EF-Ts family.

The protein resides in the cytoplasm. Its function is as follows. Associates with the EF-Tu.GDP complex and induces the exchange of GDP to GTP. It remains bound to the aminoacyl-tRNA.EF-Tu.GTP complex up to the GTP hydrolysis stage on the ribosome. The sequence is that of Elongation factor Ts (tsf) from Mycoplasma genitalium (strain ATCC 33530 / DSM 19775 / NCTC 10195 / G37) (Mycoplasmoides genitalium).